The following is a 1009-amino-acid chain: Protein WBSCR14 homolog (1009 aa).

4 disordered regions span residues Met1–Asp20, Met304–Met354, Asn488–Met531, and Ile686–Ala728. Polar residues-rich tracts occupy residues Arg324–Ser350 and Arg499–Asp508. Positions Leu511 to Ser526 are enriched in low complexity. Over residues Ile686 to Asp695 the composition is skewed to polar residues. One can recognise a bHLH domain in the interval Arg803–Leu856. A leucine-zipper region spans residues Leu856–Leu877.

In terms of tissue distribution, expressed in intestine, neurons, muscle, hypodermis, excretory cell and other tissues.

The protein resides in the nucleus. The protein localises to the cytoplasm. Its subcellular location is the mitochondrion. Its function is as follows. Transcription factor that binds to the E box motif 5'-CACGTG-3', probably in a heterodimeric complex with mxl-2. Involved in modulating longevity in response to TOR signaling, dietary restriction, the decline in protein homeostasis associated with normal aging, germline signaling and the insulin-like signaling pathway. Plays a role in autophagy. Involved in regulating migration of the ray 1 precursor cells in the male tail, acting in concert with Wnt and semaphorin signaling pathways. Regulates transcription of genes encoding extracellular matrix (ECM) components which may contribute to the substratum required for migration of the neighboring ray 1 precursor cells. Involved in repressing infection by the microsporidian pathogen N.parisii, probably acting independently of its canonical partner, mxl-2. The polypeptide is Protein WBSCR14 homolog (mml-1) (Caenorhabditis elegans).